The chain runs to 671 residues: MESLIFIAPLAGVISLVFAAFFAKSILKEDAGNKRMKEIAGAIQEGAMAYLNRQYKTIAVVSIILSFLILFLLDDGLKIAIGFLAGAISSAAAGYIGMSVSVRANIRTAHAASSGLEKAMSVAFRGGAVTGLAVVGLALLGTSSFYILYGDVDLVVGFGFGASLISLFARVGGGIFTKAADVGADLVGKVEAGIPEDDPRNAGVIADNVGDNVGDCAGMGADLFETYVVTSLAAMLLGSLIIGTYENAILYPLVLGSVAIFASIISVFFVKIGKEGKIMQALYKGVGGSAIISLIAFYFVTNSLMGDIRLFYATVVGIIITVLMVIITEYYTSTDYRPVKTIAASSETGAATNIISGLSIGFESTLVPTVVIVIGILISYFIVGGAADAGIGLYGIAIAAVAMLSTTGMIVALDSYGPITDNAGGIAQMANLPAQVRKVTDALDAVGNTTKAVTKGYAIGSAALGALALFADYRSKVNLGGQSLNLDDPVVLAGLLLGALLPFVFSAVTMSAVGKAAFEVVNEVRRQFREIPGIMEGTAKPEYGRCVDIVTKAALHEMAMPGFLAVLVPLLVGLILGPKALAGLLIGLIVVGFMLALMMDNGGGAWDNAKKLIEDGNHGGRGSEAHKAAVVGDTVGDPFKDTAGPALNALIKVVNMVAILFSSLIIHSGLF.

The next 5 helical transmembrane spans lie at 3–23 (SLIFIAPLAGVISLVFAAFFA), 57–77 (TIAVVSIILSFLILFLLDDGL), 79–99 (IAIGFLAGAISSAAAGYIGMS), 128–148 (AVTGLAVVGLALLGTSSFYIL), and 156–176 (VGFGFGASLISLFARVGGGIF). Residue lysine 178 coordinates substrate. Positions 181, 185, 208, and 211 each coordinate Mg(2+). Transmembrane regions (helical) follow at residues 223-243 (LFETYVVTSLAAMLLGSLIIG), 249-269 (ILYPLVLGSVAIFASIISVFF), 285-305 (GVGGSAIISLIAFYFVTNSLM), 310-330 (LFYATVVGIIITVLMVIITEY), 366-386 (LVPTVVIVIGILISYFIVGGA), and 391-411 (IGLYGIAIAAVAMLSTTGMIV). Residue aspartate 421 participates in Mg(2+) binding. 4 helical membrane-spanning segments follow: residues 452 to 472 (AVTKGYAIGSAALGALALFAD), 490 to 510 (VVLAGLLLGALLPFVFSAVTM), 558 to 578 (MAMPGFLAVLVPLLVGLILGP), and 580 to 600 (ALAGLLIGLIVVGFMLALMMD). Ca(2+) contacts are provided by aspartate 607, aspartate 633, and aspartate 637. Lysine 640 contacts substrate. A helical transmembrane segment spans residues 646-666 (ALNALIKVVNMVAILFSSLII).

The protein belongs to the H(+)-translocating pyrophosphatase (TC 3.A.10) family. K(+)-insensitive subfamily. Homodimer. It depends on Mg(2+) as a cofactor.

Its subcellular location is the cell membrane. The enzyme catalyses diphosphate + H2O + H(+)(in) = 2 phosphate + 2 H(+)(out). Proton pump that utilizes the energy of pyrophosphate hydrolysis as the driving force for proton movement across the membrane. Generates a proton motive force. The polypeptide is K(+)-insensitive pyrophosphate-energized proton pump (Methanosarcina acetivorans (strain ATCC 35395 / DSM 2834 / JCM 12185 / C2A)).